We begin with the raw amino-acid sequence, 749 residues long: Basic juvenile hormone-suppressible protein 2 (749 aa).

A signal peptide spans M1–L14.

Belongs to the hemocyanin family. In terms of tissue distribution, fat body, and hemolymph of larvae.

This Trichoplusia ni (Cabbage looper) protein is Basic juvenile hormone-suppressible protein 2 (BJSP-2).